A 654-amino-acid chain; its full sequence is tRNA uridine 5-carboxymethylaminomethyl modification enzyme MnmG (654 aa).

Residue 17–22 (GGGHAG) participates in FAD binding. 289–303 (GPRYCPSIEDKIVKF) lines the NAD(+) pocket.

This sequence belongs to the MnmG family. In terms of assembly, homodimer. Heterotetramer of two MnmE and two MnmG subunits. FAD is required as a cofactor.

The protein resides in the cytoplasm. Functionally, NAD-binding protein involved in the addition of a carboxymethylaminomethyl (cmnm) group at the wobble position (U34) of certain tRNAs, forming tRNA-cmnm(5)s(2)U34. The polypeptide is tRNA uridine 5-carboxymethylaminomethyl modification enzyme MnmG (Prochlorococcus marinus subsp. pastoris (strain CCMP1986 / NIES-2087 / MED4)).